A 766-amino-acid chain; its full sequence is Ubiquitin carboxyl-terminal hydrolase creB (766 aa).

The disordered stretch occupies residues 1–32 (MGSFLKSFRKDVGSAAPSVGAPPAKKEPQPLP). The span at 13–23 (GSAAPSVGAPP) shows a compositional bias: low complexity. The 412-residue stretch at 55–466 (YGMENFGNTC…CAYVLFYQET (412 aa)) folds into the USP domain. Cysteine 64 acts as the Nucleophile in catalysis. Disordered regions lie at residues 115–145 (EALA…KDSP) and 243–266 (ESPQ…SRTP). Low complexity predominate over residues 249–263 (SDVSDSVIPSSSSGS). Residue histidine 417 is the Proton acceptor of the active site. The segment at 526-752 (APTAPQLSTH…HDRSSHGKWR (227 aa)) is disordered. The segment covering 548 to 572 (SPAPDPAPLTSLPPIPPIPETPPAP) has biased composition (pro residues). Residues 573-620 (LTSRKSDLQSKKERVKEEKERKAAEKEKEKQRRKEIETRLKDRQRRED) adopt a coiled-coil conformation. Basic and acidic residues-rich tracts occupy residues 576-643 (RKSD…RNHA) and 734-747 (EQEH…DRSS).

This sequence belongs to the peptidase C19 family. In terms of assembly, interacts with creA, creC and qutD.

It catalyses the reaction Thiol-dependent hydrolysis of ester, thioester, amide, peptide and isopeptide bonds formed by the C-terminal Gly of ubiquitin (a 76-residue protein attached to proteins as an intracellular targeting signal).. Ubiquitin thioesterase component of the regulatory network controlling carbon source utilization through ubiquitination and deubiquitination involving creA, creB, creC, creD and acrB. Deubiquitinates the creA catabolic repressor and the quinate permease qutD. Also plays a role in response to carbon starvation and the control of extracellular proteases activity. This chain is Ubiquitin carboxyl-terminal hydrolase creB (creB), found in Emericella nidulans (strain FGSC A4 / ATCC 38163 / CBS 112.46 / NRRL 194 / M139) (Aspergillus nidulans).